The following is a 561-amino-acid chain: DNA ligase B (561 aa).

K125 (N6-AMP-lysine intermediate) is an active-site residue.

It belongs to the NAD-dependent DNA ligase family. LigB subfamily.

It catalyses the reaction NAD(+) + (deoxyribonucleotide)n-3'-hydroxyl + 5'-phospho-(deoxyribonucleotide)m = (deoxyribonucleotide)n+m + AMP + beta-nicotinamide D-nucleotide.. In terms of biological role, catalyzes the formation of phosphodiester linkages between 5'-phosphoryl and 3'-hydroxyl groups in double-stranded DNA using NAD as a coenzyme and as the energy source for the reaction. The sequence is that of DNA ligase B from Escherichia coli O127:H6 (strain E2348/69 / EPEC).